Consider the following 174-residue polypeptide: MASQKRSSFRHGSKMASASTTDHARHGSPRHRDSGLLDSLGRFFGGDRHVPRRGFGKDIHAARASHVGSIPQRSQHGRPGDDNPVVHFFKNIVSPRTPPPMQAKGRGLSLTRFSWGGEGHKPGYGSGKFYEHKSAHKGHKGSYHEGQGTLSKIFKLGGSGSRPGSRSGSPVARR.

The disordered stretch occupies residues 1 to 86; sequence MASQKRSSFR…GRPGDDNPVV (86 aa). Alanine 2 is subject to N-acetylalanine; in forms C1, C2 and C3. Deamidated glutamine; in forms C1 and C2; partial is present on glutamine 4. Serine 8 carries the post-translational modification Phosphoserine; in forms C2 and C3. Serine 19 is modified (phosphoserine; in form C2). Basic and acidic residues predominate over residues 22 to 35; it reads DHARHGSPRHRDSG. Arginine 25 is subject to Citrulline; in forms C1, C2 and C3. Serine 34 carries the post-translational modification Phosphoserine; in forms C2 and C3. Arginine 42 is subject to Citrulline; in form C3. Over residues 45-61 the composition is skewed to basic and acidic residues; that stretch reads GGDRHVPRRGFGKDIHA. At serine 65 the chain carries Phosphoserine; in forms C2 and C3. Glutamine 72 bears the Deamidated glutamine; in forms C1, C2 and C3; partial mark. Serine 74 carries the post-translational modification Phosphoserine; in form C2. Asparagine 91 carries the post-translational modification Deamidated asparagine; in forms C1, C2 and C3; partial. Threonine 97 is subject to Phosphothreonine; in forms C2 and C3. Residue glutamine 102 is modified to Deamidated glutamine; in forms C1, C2 and C3; partial. At glutamine 102 the chain carries Deamidated glutamine; in form C1. Position 106 is an omega-N-methylarginine; in forms C1, C2 and C3; alternate (arginine 106). A Symmetric dimethylarginine; in forms C1, C2 and C3; alternate modification is found at arginine 106. 2 positions are modified to phosphoserine; in forms C2 and C3: serine 114 and serine 142. Positions 126 to 174 are disordered; the sequence is SGKFYEHKSAHKGHKGSYHEGQGTLSKIFKLGGSGSRPGSRSGSPVARR. Glutamine 147 carries the deamidated glutamine; in forms C1, C2 and C3; partial modification. Residues 162-174 are compositionally biased toward low complexity; it reads RPGSRSGSPVARR. Serine 165 carries the phosphoserine; in forms C2 and C3 modification. Citrulline; in forms C2 and C3 is present on arginine 166. Position 169 is a phosphoserine; in forms C2 and C3 (serine 169).

This sequence belongs to the myelin basic protein family. In terms of assembly, homodimer. Several charge isomers are produced as a result of optional post-translational modifications, such as phosphorylation of serine or threonine residues, deamidation of glutamine or asparagine residues, citrullination and methylation of arginine residues. Chicken MBP contains 4 charge components denoted as C1, C2, C3 and C8. C1 lacks any phosphorylation sites, whereas C2 and C3 contain respectively 10 and 8 phosphorylation sites and arginine residues modified to citrulline. All three charge components contain deamidated glutamines and asparagine, and a methylated arginine.

It localises to the myelin membrane. In terms of biological role, is, with PLP, the most abundant protein component of the myelin membrane in the CNS. Has a role in both the formation and stabilization of this compact multilayer arrangement of bilayers. Each splice variant and charge isomer may have a specialized function in the assembly of an optimized, biochemically functional myelin membrane. This Gallus gallus (Chicken) protein is Myelin basic protein (MBP).